The following is a 166-amino-acid chain: Ribonuclease H (166 aa).

The RNase H type-1 domain maps to 10 to 151 (KRVRVDMFTD…ADELARRGTS (142 aa)). Residues aspartate 19, glutamate 57, aspartate 79, and aspartate 143 each contribute to the Mg(2+) site. Residues 145–157 (LARRGTSEARQGK) show a composition bias toward basic and acidic residues. A disordered region spans residues 145-166 (LARRGTSEARQGKVDGQSSTIL).

This sequence belongs to the RNase H family. Monomer. Requires Mg(2+) as cofactor.

The protein resides in the cytoplasm. It catalyses the reaction Endonucleolytic cleavage to 5'-phosphomonoester.. Functionally, endonuclease that specifically degrades the RNA of RNA-DNA hybrids. This chain is Ribonuclease H, found in Rhodospirillum rubrum (strain ATCC 11170 / ATH 1.1.1 / DSM 467 / LMG 4362 / NCIMB 8255 / S1).